Here is a 181-residue protein sequence, read N- to C-terminus: ADP-ribosylation factor 2-A (181 aa).

Glycine 2 is lipidated: N-myristoyl glycine. GTP is bound by residues 24 to 31 (GLDAAGKT), 67 to 71 (DVGGQ), and 126 to 129 (NKQD).

The protein belongs to the small GTPase superfamily. Arf family.

It localises to the golgi apparatus. With respect to regulation, activated by AGD10. GTP-binding protein involved in protein trafficking; may modulate vesicle budding and uncoating within the Golgi apparatus. This Arabidopsis thaliana (Mouse-ear cress) protein is ADP-ribosylation factor 2-A (ARF2-A).